A 336-amino-acid chain; its full sequence is Glyceraldehyde-3-phosphate dehydrogenase 1 (336 aa).

Residues 12 to 13 (RI), D34, and S120 contribute to the NAD(+) site. D-glyceraldehyde 3-phosphate-binding positions include 150-152 (SCT), T181, R198, 211-212 (TG), and R234. Residue C151 is the Nucleophile of the active site. N316 is a binding site for NAD(+).

The protein belongs to the glyceraldehyde-3-phosphate dehydrogenase family. In terms of assembly, homotetramer.

It is found in the cytoplasm. The enzyme catalyses D-glyceraldehyde 3-phosphate + phosphate + NAD(+) = (2R)-3-phospho-glyceroyl phosphate + NADH + H(+). The protein operates within carbohydrate degradation; glycolysis; pyruvate from D-glyceraldehyde 3-phosphate: step 1/5. In terms of biological role, catalyzes the oxidative phosphorylation of glyceraldehyde 3-phosphate (G3P) to 1,3-bisphosphoglycerate (BPG) using the cofactor NAD. The first reaction step involves the formation of a hemiacetal intermediate between G3P and a cysteine residue, and this hemiacetal intermediate is then oxidized to a thioester, with concomitant reduction of NAD to NADH. The reduced NADH is then exchanged with the second NAD, and the thioester is attacked by a nucleophilic inorganic phosphate to produce BPG. This is Glyceraldehyde-3-phosphate dehydrogenase 1 (gapA1) from Staphylococcus epidermidis (strain ATCC 35984 / DSM 28319 / BCRC 17069 / CCUG 31568 / BM 3577 / RP62A).